Consider the following 357-residue polypeptide: Velvet complex subunit 2 (357 aa).

The Velvet domain maps to 32–341 (RRAERKYKLE…AQQGIKIPIR (310 aa)).

The protein belongs to the velvet family. VelB subfamily. Component of the heterotrimeric velvet complex composed of LAE1, VEL1 and VEL2; VEL1A acting as a bridging protein between LAE1 and VEL2. Forms a heterodimeric complex with VOS1; the formation of the VEL2-VOS1 complex is light-dependent.

The protein resides in the nucleus. It localises to the cytoplasm. Functionally, component of the velvet transcription factor complex that controls sexual/asexual developmental ratio in response to light, promoting sexual development in the darkness while stimulating asexual sporulation under illumination. The velvet complex acts as a global regulator for secondary metabolite gene expression. Component of the VEL2-VOS1 heterodimeric complex that plays a dual role in activating genes associated with spore maturation and repressing certain development-associated genes. The complex binds DNA through the DNA-binding domain of VOS1 that recognizes an 11-nucleotide consensus sequence 5'-CTGGCCGCGGC-3' consisting of two motifs in the promoters of key developmental regulatory genes. The VEL2-VOS1 complex is required for normal pseudothecium development and regulates asexual spore compartmentalization, pigmentation and germination. This Cochliobolus heterostrophus (strain C5 / ATCC 48332 / race O) (Southern corn leaf blight fungus) protein is Velvet complex subunit 2.